Reading from the N-terminus, the 151-residue chain is MYPAHLLVLLAVCVSLLGAASIPARPLNLYQFGNMIQCANHGRRPTRHYMDYGCYCGKGGSGTPVDELDRCCQTHDDCYGEAEKLPACNYMMSGPYYNTYSYECNDGELTCKDNNDECKAFICNCDRTAAICFARTPYNDANWNINTKTSC.

Positions 1 to 27 (MYPAHLLVLLAVCVSLLGAASIPARPL) are cleaved as a signal peptide. Disulfide bonds link cysteine 38–cysteine 104, cysteine 54–cysteine 151, cysteine 56–cysteine 72, cysteine 71–cysteine 132, cysteine 78–cysteine 125, cysteine 88–cysteine 118, and cysteine 111–cysteine 123. Residues tyrosine 55, glycine 57, and glycine 59 each coordinate Ca(2+). The active site involves histidine 75. A Ca(2+)-binding site is contributed by aspartate 76. The active site involves aspartate 126.

The protein belongs to the phospholipase A2 family. Group I subfamily. D49 sub-subfamily. It depends on Ca(2+) as a cofactor. Expressed by the venom gland.

It is found in the secreted. It catalyses the reaction a 1,2-diacyl-sn-glycero-3-phosphocholine + H2O = a 1-acyl-sn-glycero-3-phosphocholine + a fatty acid + H(+). Functionally, PLA2 catalyzes the calcium-dependent hydrolysis of the 2-acyl groups in 3-sn-phosphoglycerides. This chain is Acidic phospholipase A2 4, found in Tropidechis carinatus (Australian rough-scaled snake).